The chain runs to 70 residues: uncharacterized protein (70 aa).

This is an uncharacterized protein from Bacillus phage phi105 (Bacteriophage phi-105).